The sequence spans 348 residues: Chitinase (348 aa).

Residues 1–29 form the signal peptide; the sequence is MKLKKIIPAFPLLSTVAVGLWLTPTQASA. The 307-residue stretch at 42 to 348 folds into the GH18 domain; the sequence is KVLVGYWHNW…FATRYSNLVK (307 aa). The Proton donor role is filled by Glu-161.

The protein belongs to the glycosyl hydrolase 18 family.

The protein resides in the secreted. It catalyses the reaction Random endo-hydrolysis of N-acetyl-beta-D-glucosaminide (1-&gt;4)-beta-linkages in chitin and chitodextrins.. It participates in glycan degradation; chitin degradation. Functionally, involved in chitin degradation. Catalyzes the cleavage of glycosidic linkages in chitooligosaccharides and in alpha- and beta-chitin. Its activity on chitooligosaccharides increases considerably with degrees of polymerization (the initial rate of hydrolysis for GlcNAc5 is about 130-fold higher than that for GlcNAc3). Its activity is greatly stimulated in the presence of the lytic chitin monooxygenase EfCBM33A, which attacks the crystalline structure of chitin and makes the polymer more accessible to the chitinase; combining the two enzymes leads to rapid and complete depolymerization of crystalline chitin, especially with beta-chitin as a substrate. Is likely involved in a chitin degradation pathway that allows E.faecalis V583 to grow on chitin as a carbon source. This Enterococcus faecalis (strain ATCC 700802 / V583) protein is Chitinase.